The primary structure comprises 946 residues: Rho GTPase-activating protein 4 (946 aa).

The F-BAR domain occupies 19–317; sequence TQVKEMRWQL…AVEALDPPGD (299 aa). Residues 128-195 adopt a coiled-coil conformation; the sequence is LAQRLSHIAE…REAERQEEKR (68 aa). Residues 187–196 are compositionally biased toward basic and acidic residues; the sequence is EAERQEEKRA. 2 disordered regions span residues 187 to 220 and 402 to 435; these read EAER…SLKK and LDSF…QQQE. 2 stretches are compositionally biased toward low complexity: residues 202 to 211 and 407 to 419; these read TTTAGATEAG and TSPS…STSS. The 189-residue stretch at 507 to 695 folds into the Rho-GAP domain; the sequence is GDMEKFIQSS…TLIVQPDRVF (189 aa). Residues 746–805 enclose the SH3 domain; the sequence is EGVVEAVACFAYTGRTAQELSFRRGDVLRLHERASSDWWRGEHNGMRGLIPHKYITLPAG. Residues Ser860, Ser901, and Ser906 each carry the phosphoserine modification. Residues 885–946 form a disordered region; it reads KTSVRQGLGP…QGLDTTPKPH (62 aa). A compositionally biased stretch (pro residues) spans 901–910; it reads SPGPRSPKAP. The span at 924 to 934 shows a compositional bias: low complexity; sequence GPGAPASPSAS.

In terms of assembly, interacts with NCKAP1L. Predominantly in hematopoietic cells (spleen, thymus and leukocytes); low levels in placenta, lung and various fetal tissues.

It is found in the cytoplasm. Its function is as follows. Inhibitory effect on stress fiber organization. May down-regulate Rho-like GTPase in hematopoietic cells. This Homo sapiens (Human) protein is Rho GTPase-activating protein 4.